The sequence spans 156 residues: Interleukin-36 receptor antagonist protein (156 aa).

An intrachain disulfide couples Cys-9 to Cys-155.

The protein belongs to the IL-1 family. In terms of assembly, interacts with cargo receptor TMED10; the interaction mediates the translocation from the cytoplasm into the ERGIC (endoplasmic reticulum-Golgi intermediate compartment) and thereby secretion. In terms of processing, removal of N-terminal methionine is necessary for full antagonistic activity. Highly abundant in embryonic tissue and tissues containing epithelial cells.

It is found in the cytoplasm. Its subcellular location is the secreted. Inhibits the activity of interleukin-36 (IL36A,IL36B and IL36G) by binding to receptor IL1RL2/IL-36R and preventing its association with the coreceptor IL1RAP for signaling. Part of the IL-36 signaling system that is thought to be present in epithelial barriers and to take part in local inflammatory response; similar to the IL-1 system with which it shares the coreceptor. Proposed to play a role in skin inflammation. May be involved in the innate immune response to fungal pathogens. May activate an anti-inflammatory signaling pathway by recruiting SIGIRR. This chain is Interleukin-36 receptor antagonist protein, found in Mus musculus (Mouse).